We begin with the raw amino-acid sequence, 427 residues long: MSVSFENKETNRGVLTFTISQDQIKPELDRVFKSVKKSLNVPGFRKGHLPRPIFDKKFGEESLYQDVMNALLPNAYEAAVKEAGLEVVAQPKIDVTSMEKGQDWVITAEVVTKPEVKLGDYKNLEVSVDVEKEVTDADVEERIERERNNLAELVIKEAAAENGDTVVIDFVGSIDGVEFDGGKGENFSLGLGSGQFIPGFEDQLVGHSAGETVDVIVTFPEDYQAEDLAGKEAKFVTTIHEVKAKEVPALDDELAKDIDEEVETLADLKEKYRKELATAKEEAYKDAVEGAAIDTAVENAEIVELPEEMIHEEVHRSVNEFLGNLQRQGINPDMYFQITGTTQEDLHNQYQAEAESRTKTNLVIEAVAKAEGFDASEEEIQKEVEQLAADYNMEVAQVQNLLSADMLKHDITIKKAVELITSTATVK.

In terms of domain architecture, PPIase FKBP-type spans 163–248 (GDTVVIDFVG…IHEVKAKEVP (86 aa)).

This sequence belongs to the FKBP-type PPIase family. Tig subfamily.

It is found in the cytoplasm. The catalysed reaction is [protein]-peptidylproline (omega=180) = [protein]-peptidylproline (omega=0). Functionally, involved in protein export. Acts as a chaperone by maintaining the newly synthesized protein in an open conformation. Functions as a peptidyl-prolyl cis-trans isomerase. The chain is Trigger factor from Streptococcus pneumoniae (strain 70585).